The chain runs to 191 residues: Glycerol-3-phosphate acyltransferase (191 aa).

5 consecutive transmembrane segments (helical) span residues 3–23 (YLIV…FILT), 51–71 (TLGY…VLYV), 78–98 (YIFI…WLKF), 108–128 (VGIL…SWAV), and 150–170 (YLIV…VLIF).

The protein belongs to the PlsY family. In terms of assembly, probably interacts with PlsX.

The protein resides in the cell inner membrane. It catalyses the reaction an acyl phosphate + sn-glycerol 3-phosphate = a 1-acyl-sn-glycero-3-phosphate + phosphate. Its pathway is lipid metabolism; phospholipid metabolism. In terms of biological role, catalyzes the transfer of an acyl group from acyl-phosphate (acyl-PO(4)) to glycerol-3-phosphate (G3P) to form lysophosphatidic acid (LPA). This enzyme utilizes acyl-phosphate as fatty acyl donor, but not acyl-CoA or acyl-ACP. The polypeptide is Glycerol-3-phosphate acyltransferase (Pelagibacter ubique (strain HTCC1062)).